Consider the following 62-residue polypeptide: uncharacterized protein (62 aa).

This is an uncharacterized protein from Escherichia coli O157:H7.